Reading from the N-terminus, the 626-residue chain is Ankyrin repeat domain-containing protein 13B (626 aa).

Residue methionine 1 is modified to N-acetylmethionine. ANK repeat units follow at residues 47–76 (RGRT…DVGR) and 80–109 (SGWT…YQRV). Residues 442 to 470 (PVPSVRGSPGSETPSPGSDSSSVSSSSST) are disordered. The segment covering 448-470 (GSPGSETPSPGSDSSSVSSSSST) has biased composition (low complexity). In terms of domain architecture, UIM 1 spans 503 to 522 (EDDDLLRFAIQQSLLEAGSE). The disordered stretch occupies residues 534 to 614 (NSKPGTHPMS…RRRVRQEEEE (81 aa)). Residues 554–575 (PPTPQRQPMPPAPVPSPRPSPG) show a composition bias toward pro residues. UIM domains are found at residues 585-604 (SYDE…QEER) and 610-626 (QEEE…LTEQ).

As to quaternary structure, interacts with EGFR (ubiquitinated); the interaction is direct and may regulate EGFR internalization.

It localises to the cell membrane. The protein resides in the late endosome. It is found in the early endosome. Ubiquitin-binding protein that specifically recognizes and binds 'Lys-63'-linked ubiquitin. Does not bind 'Lys-48'-linked ubiquitin. Positively regulates the internalization of ligand-activated EGFR by binding to the Ub moiety of ubiquitinated EGFR at the cell membrane. The polypeptide is Ankyrin repeat domain-containing protein 13B (Ankrd13b) (Mus musculus (Mouse)).